Here is a 380-residue protein sequence, read N- to C-terminus: Endo-chitosanase C (380 aa).

The first 22 residues, 1-22, serve as a signal peptide directing secretion; the sequence is MPIKSFASRLALSLAICGTAMG. An R3-1 repeat occupies 276–304; sequence CSWPGHCAGATCSSNDDCSDDLTCQNGKC. One copy of the R3-2 repeat lies at 311 to 341; it reads ETCSWEGHCKGATCSSNDDCSDELACISGIC. The stretch at 348-378 is one R3-3 repeat; that stretch reads ETCEWEGHCEGASCSSHDDCDGNLACKNGKC.

Belongs to the glycosyl hydrolase 75 family.

It is found in the secreted. The enzyme catalyses Endohydrolysis of beta-(1-&gt;4)-linkages between D-glucosamine residues in a partly acetylated chitosan.. In terms of biological role, chitosanase catalyzing the endo-type cleavage of chitosan, the deacylated form of chitin. Chitosanase may be crucial in the degradation of the deacetylated portion of chitin in the fungal cell wall. Chitoolisaccharides produced by the hydrolysis of partially N-acetylated chitosan are known to have many biological activities, including antibacterial activity, immune-enhancing effects, and elicitor activity. The chain is Endo-chitosanase C (csnC) from Aspergillus oryzae (Yellow koji mold).